The primary structure comprises 180 residues: Tubulin polymerization-promoting protein homolog (180 aa).

Composition is skewed to basic and acidic residues over residues 136-158 (TGAH…RADT) and 169-180 (KNKDSYDKTHGK). Positions 136 to 180 (TGAHKERFDAEGKGKGKSGRADTTENTGYVGAYKNKDSYDKTHGK) are disordered.

Belongs to the TPPP family.

Its function is as follows. Regulator of microtubule dynamics. This is Tubulin polymerization-promoting protein homolog from Caenorhabditis elegans.